Here is a 314-residue protein sequence, read N- to C-terminus: Replication initiation protein (314 aa).

Residues 1 to 10 are compositionally biased toward polar residues; sequence MSKNNHANHS. The interval 1-25 is disordered; that stretch reads MSKNNHANHSNHLENHDLDNFSKTG. Basic and acidic residues predominate over residues 11 to 20; the sequence is NHLENHDLDN.

Belongs to the plasmid replication initiation factor family.

Functionally, this protein is probably a specific topoisomerase involved in initiating replication. This protein is specifically required and may be rate-limiting for replication of the plasmid in vivo. This Staphylococcus aureus protein is Replication initiation protein (repN).